The chain runs to 88 residues: NADH-ubiquinone oxidoreductase chain 4L (88 aa).

The next 2 membrane-spanning stretches (helical) occupy residues 22 to 42 and 57 to 77; these read IILM…LVLV and IYII…LVAY.

It belongs to the complex I subunit 4L family.

The protein localises to the mitochondrion membrane. It catalyses the reaction a ubiquinone + NADH + 5 H(+)(in) = a ubiquinol + NAD(+) + 4 H(+)(out). Functionally, core subunit of the mitochondrial membrane respiratory chain NADH dehydrogenase (Complex I) that is believed to belong to the minimal assembly required for catalysis. Complex I functions in the transfer of electrons from NADH to the respiratory chain. The immediate electron acceptor for the enzyme is believed to be ubiquinone. The sequence is that of NADH-ubiquinone oxidoreductase chain 4L (ND4L) from Trimorphomyces papilionaceus (Jelly fungus).